The following is a 165-amino-acid chain: MPSFDVVSKIDLAELDNAVNQTKKELSTRYDFQGTHADVVLAPDNTAITVKANSEDRVQAAKEVLLTKLAKRNISLFALEYGDIEKTGLHNVKQVIKLQQGIPVEKSKELVKLLKDSKMKVQGSIQADQLRVTGKNRDDLQAAIALFRKEQDRLKLDMQFINFRD.

This sequence belongs to the YajQ family.

Nucleotide-binding protein. In Myxococcus xanthus (strain DK1622), this protein is Nucleotide-binding protein MXAN_1478.